Consider the following 194-residue polypeptide: 7-methyl-GTP pyrophosphatase (194 aa).

D70 serves as the catalytic Proton acceptor.

It belongs to the Maf family. YceF subfamily. It depends on a divalent metal cation as a cofactor.

The protein resides in the cytoplasm. The enzyme catalyses N(7)-methyl-GTP + H2O = N(7)-methyl-GMP + diphosphate + H(+). In terms of biological role, nucleoside triphosphate pyrophosphatase that hydrolyzes 7-methyl-GTP (m(7)GTP). May have a dual role in cell division arrest and in preventing the incorporation of modified nucleotides into cellular nucleic acids. The sequence is that of 7-methyl-GTP pyrophosphatase from Vibrio vulnificus (strain CMCP6).